The sequence spans 239 residues: Ribose-5-phosphate isomerase A (239 aa).

Substrate is bound by residues 34-37 (TGST), 94-97 (DGAD), and 107-110 (KGGG). E116 functions as the Proton acceptor in the catalytic mechanism. Position 134 (K134) interacts with substrate.

Belongs to the ribose 5-phosphate isomerase family. Homodimer.

It carries out the reaction aldehydo-D-ribose 5-phosphate = D-ribulose 5-phosphate. It functions in the pathway carbohydrate degradation; pentose phosphate pathway; D-ribose 5-phosphate from D-ribulose 5-phosphate (non-oxidative stage): step 1/1. Functionally, catalyzes the reversible conversion of ribose-5-phosphate to ribulose 5-phosphate. The chain is Ribose-5-phosphate isomerase A from Treponema denticola (strain ATCC 35405 / DSM 14222 / CIP 103919 / JCM 8153 / KCTC 15104).